Here is a 610-residue protein sequence, read N- to C-terminus: uncharacterized protein (610 aa).

Residues 1-28 (MDSPSTSESPLKKNTIQDFGESNMTESP) are compositionally biased toward polar residues. Residues 1 to 36 (MDSPSTSESPLKKNTIQDFGESNMTESPQSKEEIDE) are disordered. The RING-type zinc finger occupies 41–82 (CSVCKNEIIDTTSLSDCCHEFCYDCIVGWLTKGSGPFCPMCK). Disordered regions lie at residues 390–411 (YRGQPQAPLRLGPNATNPFRPA) and 431–515 (TSSA…SADR). Residues 432-447 (SSAGAGSARSRGSDSV) are compositionally biased toward low complexity. 2 stretches are compositionally biased toward acidic residues: residues 448–470 (VEIDDDDDNDGVDVDDDDREDSD) and 478–487 (SEEDSDEEIQ).

This is an uncharacterized protein from Caenorhabditis elegans.